Reading from the N-terminus, the 159-residue chain is MPSFDVVSELDKHEVTNAIDNAIKELDRRYDLRGKGSFEQKDLTVQLTAEAEFQLEQMLEILKLSLVKRKIDIQCLEVKDAYASGKTMKQEAVLREGIDKELAKKIVAHIKDAKLKVQAAIQGEQVRVTGKKRDDLQEAIALLRGHEFGMPLQFNNFRD.

It belongs to the YajQ family.

Functionally, nucleotide-binding protein. The polypeptide is Nucleotide-binding protein PST_3153 (Stutzerimonas stutzeri (strain A1501) (Pseudomonas stutzeri)).